We begin with the raw amino-acid sequence, 274 residues long: ATP synthase subunit delta (274 aa).

The protein belongs to the ATPase delta chain family. As to quaternary structure, F-type ATPases have 2 components, F(1) - the catalytic core - and F(0) - the membrane proton channel. F(1) has five subunits: alpha(3), beta(3), gamma(1), delta(1), epsilon(1). F(0) has three main subunits: a(1), b(2) and c(10-14). The alpha and beta chains form an alternating ring which encloses part of the gamma chain. F(1) is attached to F(0) by a central stalk formed by the gamma and epsilon chains, while a peripheral stalk is formed by the delta and b chains.

It localises to the cell membrane. In terms of biological role, f(1)F(0) ATP synthase produces ATP from ADP in the presence of a proton or sodium gradient. F-type ATPases consist of two structural domains, F(1) containing the extramembraneous catalytic core and F(0) containing the membrane proton channel, linked together by a central stalk and a peripheral stalk. During catalysis, ATP synthesis in the catalytic domain of F(1) is coupled via a rotary mechanism of the central stalk subunits to proton translocation. Functionally, this protein is part of the stalk that links CF(0) to CF(1). It either transmits conformational changes from CF(0) to CF(1) or is implicated in proton conduction. The protein is ATP synthase subunit delta of Salinispora arenicola (strain CNS-205).